Reading from the N-terminus, the 193-residue chain is tRNA(Phe) 7-((3-amino-3-carboxypropyl)-4-demethylwyosine(37)-N(4))-methyltransferase (193 aa).

Belongs to the TYW3 family.

It carries out the reaction 4-demethyl-7-[(3S)-3-amino-3-carboxypropyl]wyosine(37) in tRNA(Phe) + S-adenosyl-L-methionine = 7-[(3S)-3-amino-3-carboxypropyl]wyosine(37) in tRNA(Phe) + S-adenosyl-L-homocysteine + H(+). Its function is as follows. S-adenosyl-L-methionine-dependent methyltransferase that acts as a component of the wyosine derivatives biosynthesis pathway. Probably methylates N-4 position of wybutosine-86 to produce wybutosine-72. In Methanocaldococcus jannaschii (strain ATCC 43067 / DSM 2661 / JAL-1 / JCM 10045 / NBRC 100440) (Methanococcus jannaschii), this protein is tRNA(Phe) 7-((3-amino-3-carboxypropyl)-4-demethylwyosine(37)-N(4))-methyltransferase.